The chain runs to 1856 residues: Protein TANC1 (1856 aa).

An N-acetylmethionine modification is found at methionine 1. Disordered stretches follow at residues methionine 1–threonine 45, serine 58–proline 130, lysine 203–glycine 222, arginine 262–tyrosine 296, and isoleucine 437–glutamate 489. Basic and acidic residues predominate over residues lysine 8–glycine 21. The segment covering proline 29–threonine 45 has biased composition (polar residues). Serine 60, serine 63, serine 64, serine 204, serine 267, and serine 462 each carry phosphoserine. Positions serine 60–arginine 77 are enriched in low complexity. Positions lysine 203–leucine 216 are enriched in polar residues. Low complexity predominate over residues serine 439–threonine 475. 11 ANK repeats span residues glutamate 893–tyrosine 925, asparagine 931–glycine 960, asparagine 964–histidine 993, lysine 997–proline 1026, alanine 1037–isoleucine 1066, tryptophan 1075–arginine 1104, arginine 1108–leucine 1137, glutamine 1141–serine 1170, glutamate 1174–glutamine 1203, asparagine 1207–histidine 1236, and serine 1240–asparagine 1269. TPR repeat units follow at residues leucine 1286–glutamate 1319, valine 1333–serine 1366, and glutamate 1368–asparagine 1400. Residues leucine 1417 to glutamine 1426 are compositionally biased toward low complexity. Disordered regions lie at residues leucine 1417–arginine 1597, aspartate 1636–phenylalanine 1720, and histidine 1832–valine 1856. 2 positions are modified to phosphoserine: serine 1436 and serine 1463. Acidic residues predominate over residues glutamate 1454–serine 1463. Polar residues-rich tracts occupy residues glutamate 1490–alanine 1505 and proline 1524–glutamine 1556. Residues serine 1656–serine 1686 show a composition bias toward low complexity. A phosphoserine mark is found at serine 1665, serine 1673, and serine 1674.

The protein belongs to the TANC family. In terms of assembly, interacts probably directly with DLG1, DLG4, HOMER1. Interacts with DLGAP1, INA, CAMK2A, GRIN2B and GRIA1. Interacts with TNIK and MINK1. Phosphorylated; by MINK1 and TNIK upon stimulation by RAP2A.

The protein localises to the postsynaptic density. In terms of biological role, may be a scaffold component in the postsynaptic density. This chain is Protein TANC1 (Tanc1), found in Mus musculus (Mouse).